The sequence spans 613 residues: NADH-quinone oxidoreductase subunit L (613 aa).

The Periplasmic portion of the chain corresponds to 1–6 (MNMLAL). A helical transmembrane segment spans residues 7–23 (TIILPLIGFVLLAFSRG). Residues 24–31 (RWSENVSA) are Cytoplasmic-facing. Residues 32-52 (IVGVGSVGLAALVTAFIGVDF) traverse the membrane as a helical segment. At 53–74 (FANGEQTYSQPLWTWMSVGDFN) the chain is on the periplasmic side. The chain crosses the membrane as a helical span at residues 75–99 (IGFNLVLDGLSLTMLSVVTGVGFLI). At 100-115 (HMYASWYMRGEEGYSR) the chain is on the cytoplasmic side. Residues 116–133 (FFAYTNLFIASMVVLVLA) traverse the membrane as a helical segment. Residues 134 to 210 (DNLLLMYLGW…VELAPAHFAD (77 aa)) lie on the Periplasmic side of the membrane. A helical transmembrane segment spans residues 211–228 (GNNMLMWATLMLLGGAVG). The Cytoplasmic portion of the chain corresponds to 229–248 (KSAQLPLQTWLADAMAGPTP). The helical transmembrane segment at 249–267 (VSALIHAATMVTAGVYLIA) threads the bilayer. At 268-281 (RTHGLFLMTPEVLH) the chain is on the periplasmic side. The chain crosses the membrane as a helical span at residues 282 to 300 (LVGIVGAVTLLLAGFAALV). At 301–306 (QTDIKR) the chain is on the cytoplasmic side. Residues 307-325 (VLAYSTMSQIGYMFLALGV) form a helical membrane-spanning segment. Topologically, residues 326-338 (QAWDAAIFHLMTH) are periplasmic. Residues 339 to 356 (AFFKALLFLASGSVILAC) traverse the membrane as a helical segment. The Cytoplasmic segment spans residues 357 to 373 (HHEQNIFKMGGLRKSIP). The helical transmembrane segment at 374-397 (LVYLCFLVGGAALSALPLVTAGFF) threads the bilayer. The Periplasmic portion of the chain corresponds to 398–413 (SKDEILAGAMANGHIN). The chain crosses the membrane as a helical span at residues 414–437 (LMVAGLVGAFMTSLYTFRMIFIVF). The Cytoplasmic segment spans residues 438-454 (HGKEQIHAHAVKGVTHS). Residues 455–472 (LPLIVLLILSTFVGALIV) form a helical membrane-spanning segment. Residues 473 to 494 (PPLQGVLPQTTELAHGSMLTLE) are Periplasmic-facing. The helical transmembrane segment at 495–514 (ITSGVVAVVGILLAAWLWLG) threads the bilayer. The Cytoplasmic portion of the chain corresponds to 515–589 (KRTLVTSIAN…GKGLLLSENG (75 aa)). The helical transmembrane segment at 590–607 (YLRWYVASMSIGAVVVLA) threads the bilayer. At 608–613 (LLMVLR) the chain is on the periplasmic side.

The protein belongs to the complex I subunit 5 family. Composed of 13 different subunits. Subunits NuoA, H, J, K, L, M, N constitute the membrane sector of the complex.

Its subcellular location is the cell inner membrane. The catalysed reaction is a quinone + NADH + 5 H(+)(in) = a quinol + NAD(+) + 4 H(+)(out). Its function is as follows. NDH-1 shuttles electrons from NADH, via FMN and iron-sulfur (Fe-S) centers, to quinones in the respiratory chain. The immediate electron acceptor for the enzyme in this species is believed to be ubiquinone. Couples the redox reaction to proton translocation (for every two electrons transferred, four hydrogen ions are translocated across the cytoplasmic membrane), and thus conserves the redox energy in a proton gradient. The protein is NADH-quinone oxidoreductase subunit L (nuoL) of Escherichia coli (strain K12).